We begin with the raw amino-acid sequence, 348 residues long: Dihydroorotase (348 aa).

2 residues coordinate Zn(2+): His17 and His19. Substrate is bound by residues 19–21 (HLR) and Asn45. Zn(2+)-binding residues include Lys103, His140, and His178. Lys103 is subject to N6-carboxylysine. Residue His140 participates in substrate binding. Leu223 is a substrate binding site. A Zn(2+)-binding site is contributed by Asp251. Asp251 is an active-site residue. The substrate site is built by His255 and Ala267.

The protein belongs to the metallo-dependent hydrolases superfamily. DHOase family. Class II DHOase subfamily. As to quaternary structure, homodimer. It depends on Zn(2+) as a cofactor. The cofactor is Co(2+). Requires Mg(2+) as cofactor. Ni(2+) serves as cofactor.

The enzyme catalyses (S)-dihydroorotate + H2O = N-carbamoyl-L-aspartate + H(+). The protein operates within pyrimidine metabolism; UMP biosynthesis via de novo pathway; (S)-dihydroorotate from bicarbonate: step 3/3. Its function is as follows. Catalyzes the reversible cyclization of carbamoyl aspartate to dihydroorotate. This chain is Dihydroorotase, found in Klebsiella pneumoniae subsp. pneumoniae (strain ATCC 700721 / MGH 78578).